Consider the following 444-residue polypeptide: MIAAPLDAVAGSKGKKPFYSHLYVQVLVAIAAGILLGHFYPELGTQLKPLGDAFIKLVKMIIAPVIFLTVATGIAGMSDLQKVGRVAGKAMLYFLTFSTLALIIGLIVANVVQPGAGMNIDPASLDPAAVATFAAKAHEQSIVGFLTNIIPTTIVGAFADGDILQVLFFSVLFGIALAMVGEKGEQVVNFLNSLTAPVFKLVAILMKAAPIGAFGAMAFTIGKYGVGSIANLAMLIGTFYITSLLFVFIVLGAVARYNGFSIVALLRYIKEELLLVLGTSSSEAALPGLMNKMEKAGCKRSVVGLVIPTGYSFNLDGTNIYMTLAALFIAQATGIHLSWGDQILLLLVAMLSSKGAAGITGAGFITLAATLSVVPSVPVAGMALILGIDRFMSECRALTNLVGNAVATIVVARWENELDTVQLAAALGGQTGEDTSAAGLQPAE.

Transmembrane regions (helical) follow at residues 18–40 (FYSH…GHFY), 53–75 (AFIK…TGIA), 90–112 (AMLY…ANVV), 142–159 (IVGF…GAFA), 163–180 (ILQV…LAMV), 201–222 (LVAI…FTIG), 232–254 (LAML…LGAV), 327–349 (LFIA…LLVA), and 364–386 (FITL…ALIL).

The protein belongs to the dicarboxylate/amino acid:cation symporter (DAACS) (TC 2.A.23) family.

It is found in the cell inner membrane. Responsible for the transport of dicarboxylates such as succinate, fumarate, and malate from the periplasm across the inner membrane. This transport system plays an important role in the energy supply of rhizobium-legume symbionts. The sequence is that of C4-dicarboxylate transport protein (dctA) from Rhizobium leguminosarum.